The sequence spans 3079 residues: Inhibitory regulator protein IRA2 (3079 aa).

The tract at residues 392–554 (NQNAHQGSSS…RASYDAHKTG (163 aa)) is disordered. Residues 399–416 (SSSPSSSSPSSPPSSSSS) show a composition bias toward low complexity. The segment covering 417 to 442 (DNNNQNIIAKSLSRQLSHHQSYIQQQ) has biased composition (polar residues). The segment covering 449-477 (SSWTTNSQSSTSLSSSTSNSTTTDFSTHT) has biased composition (low complexity). The span at 488-497 (DTPTMSNITI) shows a compositional bias: polar residues. Positions 498-528 (SASSLLSQTPTPTTQLQQRLNSAAAAAAAAA) are enriched in low complexity. Residues 529–546 (SPSNSTPTGYTAEQQSRA) are compositionally biased toward polar residues. A Phosphothreonine modification is found at Thr-635. Disordered stretches follow at residues 867–898 (FKGS…PLGL), 912–935 (GSST…LSSD), and 952–980 (GPSS…VQRP). Low complexity-rich tracts occupy residues 873-894 (SLCS…TPVS) and 921-934 (NVNS…NLSS). Positions 961 to 980 (IPTTLTSPPGTEKSSPVQRP) are enriched in polar residues. Residues 1717 to 1922 (NATHIVVAQL…DRIFRFLAEL (206 aa)) form the Ras-GAP domain.

It is found in the cytoplasm. Inhibitory regulator of the Ras-cyclic AMP pathway. Stimulates the GTPase activity of Ras proteins. The chain is Inhibitory regulator protein IRA2 (IRA2) from Saccharomyces cerevisiae (strain ATCC 204508 / S288c) (Baker's yeast).